The sequence spans 334 residues: Holliday junction branch migration complex subunit RuvB (334 aa).

Positions 1–181 are large ATPase domain (RuvB-L); sequence MHDRLISGTE…FGIVQRLEFY (181 aa). Residues isoleucine 20, arginine 21, glycine 62, lysine 65, threonine 66, threonine 67, 128–130, arginine 171, tyrosine 181, and arginine 218 each bind ATP; that span reads EDY. Residue threonine 66 coordinates Mg(2+). The tract at residues 182 to 252 is small ATPAse domain (RuvB-S); the sequence is SVEDLTHIVT…MAQRALDMLN (71 aa). Positions 255–334 are head domain (RuvB-H); the sequence is KDGLDTLDRR…FGLTPPEPKN (80 aa). 2 residues coordinate DNA: arginine 310 and arginine 315.

This sequence belongs to the RuvB family. As to quaternary structure, homohexamer. Forms an RuvA(8)-RuvB(12)-Holliday junction (HJ) complex. HJ DNA is sandwiched between 2 RuvA tetramers; dsDNA enters through RuvA and exits via RuvB. An RuvB hexamer assembles on each DNA strand where it exits the tetramer. Each RuvB hexamer is contacted by two RuvA subunits (via domain III) on 2 adjacent RuvB subunits; this complex drives branch migration. In the full resolvosome a probable DNA-RuvA(4)-RuvB(12)-RuvC(2) complex forms which resolves the HJ.

It is found in the cytoplasm. The enzyme catalyses ATP + H2O = ADP + phosphate + H(+). Functionally, the RuvA-RuvB-RuvC complex processes Holliday junction (HJ) DNA during genetic recombination and DNA repair, while the RuvA-RuvB complex plays an important role in the rescue of blocked DNA replication forks via replication fork reversal (RFR). RuvA specifically binds to HJ cruciform DNA, conferring on it an open structure. The RuvB hexamer acts as an ATP-dependent pump, pulling dsDNA into and through the RuvAB complex. RuvB forms 2 homohexamers on either side of HJ DNA bound by 1 or 2 RuvA tetramers; 4 subunits per hexamer contact DNA at a time. Coordinated motions by a converter formed by DNA-disengaged RuvB subunits stimulates ATP hydrolysis and nucleotide exchange. Immobilization of the converter enables RuvB to convert the ATP-contained energy into a lever motion, pulling 2 nucleotides of DNA out of the RuvA tetramer per ATP hydrolyzed, thus driving DNA branch migration. The RuvB motors rotate together with the DNA substrate, which together with the progressing nucleotide cycle form the mechanistic basis for DNA recombination by continuous HJ branch migration. Branch migration allows RuvC to scan DNA until it finds its consensus sequence, where it cleaves and resolves cruciform DNA. The sequence is that of Holliday junction branch migration complex subunit RuvB from Acinetobacter baylyi (strain ATCC 33305 / BD413 / ADP1).